A 471-amino-acid polypeptide reads, in one-letter code: UTP--glucose-1-phosphate uridylyltransferase (471 aa).

UTP-binding positions include 87-90 (LNGG), K101, Q164, and G193. Substrate is bound at residue 89 to 90 (GG). Substrate-binding positions include H194 and 222–224 (NSD). The UTP site is built by D224 and K362.

It belongs to the UDPGP type 1 family.

Its subcellular location is the cytoplasm. It catalyses the reaction alpha-D-glucose 1-phosphate + UTP + H(+) = UDP-alpha-D-glucose + diphosphate. Plays a central role as a glucosyl donor in cellular metabolic pathways. This Astragalus penduliflorus (Mountain lentil) protein is UTP--glucose-1-phosphate uridylyltransferase (UGP).